The primary structure comprises 192 residues: Orotate phosphoribosyltransferase (192 aa).

5-phospho-alpha-D-ribose 1-diphosphate contacts are provided by residues arginine 101, lysine 102, lysine 105, histidine 107, and 129-137 (EDVITTGGS). Residues threonine 133 and arginine 161 each contribute to the orotate site.

The protein belongs to the purine/pyrimidine phosphoribosyltransferase family. PyrE subfamily. In terms of assembly, homodimer. Requires Mg(2+) as cofactor.

It carries out the reaction orotidine 5'-phosphate + diphosphate = orotate + 5-phospho-alpha-D-ribose 1-diphosphate. It participates in pyrimidine metabolism; UMP biosynthesis via de novo pathway; UMP from orotate: step 1/2. Catalyzes the transfer of a ribosyl phosphate group from 5-phosphoribose 1-diphosphate to orotate, leading to the formation of orotidine monophosphate (OMP). This Sorangium cellulosum (strain So ce56) (Polyangium cellulosum (strain So ce56)) protein is Orotate phosphoribosyltransferase.